Here is a 413-residue protein sequence, read N- to C-terminus: Serine hydroxymethyltransferase (413 aa).

Residues leucine 120 and 124-126 contribute to the (6S)-5,6,7,8-tetrahydrofolate site; that span reads GHL. Lysine 228 bears the N6-(pyridoxal phosphate)lysine mark.

It belongs to the SHMT family. As to quaternary structure, homodimer. Pyridoxal 5'-phosphate serves as cofactor.

Its subcellular location is the cytoplasm. It catalyses the reaction (6R)-5,10-methylene-5,6,7,8-tetrahydrofolate + glycine + H2O = (6S)-5,6,7,8-tetrahydrofolate + L-serine. Its pathway is one-carbon metabolism; tetrahydrofolate interconversion. The protein operates within amino-acid biosynthesis; glycine biosynthesis; glycine from L-serine: step 1/1. Functionally, catalyzes the reversible interconversion of serine and glycine with tetrahydrofolate (THF) serving as the one-carbon carrier. This reaction serves as the major source of one-carbon groups required for the biosynthesis of purines, thymidylate, methionine, and other important biomolecules. Also exhibits THF-independent aldolase activity toward beta-hydroxyamino acids, producing glycine and aldehydes, via a retro-aldol mechanism. In Agathobacter rectalis (strain ATCC 33656 / DSM 3377 / JCM 17463 / KCTC 5835 / VPI 0990) (Eubacterium rectale), this protein is Serine hydroxymethyltransferase.